Reading from the N-terminus, the 316-residue chain is Probable 5-dehydro-4-deoxyglucarate dehydratase (316 aa).

It belongs to the DapA family.

It catalyses the reaction 5-dehydro-4-deoxy-D-glucarate + H(+) = 2,5-dioxopentanoate + CO2 + H2O. The protein operates within carbohydrate acid metabolism; D-glucarate degradation; 2,5-dioxopentanoate from D-glucarate: step 2/2. The protein is Probable 5-dehydro-4-deoxyglucarate dehydratase of Corynebacterium glutamicum (strain ATCC 13032 / DSM 20300 / JCM 1318 / BCRC 11384 / CCUG 27702 / LMG 3730 / NBRC 12168 / NCIMB 10025 / NRRL B-2784 / 534).